The primary structure comprises 307 residues: MKPKVLLAGGTGYIGKYLSEVIENDAELFAISKYPDNKKTDDVEMTWIQCDIFHYEQVVAAMNQIDIAVFFIDPTKNSAKITQSSARDLTLIAADNFGRAAAINQVKKVIYIPGSRYDNETIERLGAYGTPVETTNLVFKRSLVNVELQVSKYDDVRSTMKVVLPKGWTLKNVVNHFIAWMGYTKGTFVKTEKSHDQFKIYIKNKVRPLAVFKIEETADGIITLILLSGSLVKKYTVNQGKLEFRLIKESAVVYIHLYDYIPRLFWPIYYFIQAPMQKMMIHGFEVDCRIKDFQSRLKSGENMKYTK.

As to quaternary structure, homodimer. Interacts with GraR and GraS.

Functionally, plays a role in resistance against cationic antimicrobial peptides (CAMPs). Facilitates the activation of GraS to transduce the signal to GraR. The sequence is that of Auxiliary protein GraX (graX) from Staphylococcus aureus (strain NCTC 8325 / PS 47).